The primary structure comprises 131 residues: Peptide methionine sulfoxide reductase MsrB (131 aa).

One can recognise a MsrB domain in the interval 8–130 (DAEWRAQLTD…NSVCLDLKRS (123 aa)). Zn(2+) is bound by residues Cys47, Cys50, Cys96, and Cys99. Cys119 acts as the Nucleophile in catalysis.

The protein belongs to the MsrB Met sulfoxide reductase family. The cofactor is Zn(2+).

The enzyme catalyses L-methionyl-[protein] + [thioredoxin]-disulfide + H2O = L-methionyl-(R)-S-oxide-[protein] + [thioredoxin]-dithiol. The sequence is that of Peptide methionine sulfoxide reductase MsrB from Alkalilimnicola ehrlichii (strain ATCC BAA-1101 / DSM 17681 / MLHE-1).